The chain runs to 281 residues: MSQTSTLKGQCIAEFLGTGLLIFFGVGCVAALKVAGASFGQWEISVIWGLGVAMAIYLTAGVSGAHLNPAVTIALWLFACFDKRKVIPFIVSQVAGAFCAAALVYGLYYNLFFDFEQTHHIVRGSVESVDLAGTFSTYPNPHINFVQAFAVEMVITAILMGLILALTDDGNGVPRGPLAPLLIGLLIAVIGASMGPLTGFAMNPARDFGPKVFAWLAGWGNVAFTGGRDIPYFLVPLFSPIVGAIVGAFAYRKLIGRHLPCDICVVEEKETTTPSEQKASL.

Topologically, residues 1-5 are cytoplasmic; that stretch reads MSQTS. The helical transmembrane segment at 6–34 threads the bilayer; it reads TLKGQCIAEFLGTGLLIFFGVGCVAALKV. At 35-39 the chain is on the periplasmic side; the sequence is AGASF. The helical transmembrane segment at 40-60 threads the bilayer; it reads GQWEISVIWGLGVAMAIYLTA. The Cytoplasmic portion of the chain corresponds to 61 to 63; it reads GVS. Residues 64–67 lie within the membrane without spanning it; the sequence is GAHL. The short motif at 68–70 is the NPA 1 element; that stretch reads NPA. The segment at residues 68–78 is an intramembrane region (helical); that stretch reads NPAVTIALWLF. Residues 79-84 lie on the Cytoplasmic side of the membrane; the sequence is ACFDKR. Residues 85-108 form a helical membrane-spanning segment; sequence KVIPFIVSQVAGAFCAAALVYGLY. Over 109 to 143 the chain is Periplasmic; it reads YNLFFDFEQTHHIVRGSVESVDLAGTFSTYPNPHI. A helical transmembrane segment spans residues 144-169; that stretch reads NFVQAFAVEMVITAILMGLILALTDD. The Cytoplasmic segment spans residues 170 to 177; that stretch reads GNGVPRGP. The chain crosses the membrane as a helical span at residues 178–194; it reads LAPLLIGLLIAVIGASM. The Periplasmic segment spans residues 195-198; the sequence is GPLT. The stretch at 199–202 is an intramembrane region; the sequence is GFAM. An NPA 2 motif is present at residues 203 to 205; that stretch reads NPA. Positions 203–216 form an intramembrane region, helical; the sequence is NPARDFGPKVFAWL. Topologically, residues 217-231 are periplasmic; the sequence is AGWGNVAFTGGRDIP. The chain crosses the membrane as a helical span at residues 232–254; that stretch reads YFLVPLFSPIVGAIVGAFAYRKL. Residues 255-281 lie on the Cytoplasmic side of the membrane; sequence IGRHLPCDICVVEEKETTTPSEQKASL.

The protein belongs to the MIP/aquaporin (TC 1.A.8) family. In terms of assembly, homotetramer.

The protein resides in the cell inner membrane. It carries out the reaction glycerol(in) = glycerol(out). In terms of biological role, mediates glycerol diffusion across the cytoplasmic membrane via a pore-type mechanism. This is Glycerol uptake facilitator protein (glpF) from Shigella flexneri.